A 371-amino-acid chain; its full sequence is MKIRFVFILSVLISGVCCISKNVSRRVANRMTAHSRFLFVHDKYKRNKNFKLKNNKEENNFINLYTVKNPLKCKIVDKINLVRPNSPNEVYHLEINHNGLFKYLEGHTCGIIPYYNELDNNPNNQINKDHNIINTTNHTNHNNIALSHIKKQRCARLYSISSSNNMENLSVAIKIHKYEQTENAPNITNYGYCSGFIKNLKINDDIYLTGAHGYFNLPNDAIQKNTNFIFIATGTGISPYISFLKKLFAYDKNNLYNRNSNYTGYITIYYGVYNEDSILYLNELEYFQKMYPNNINIHYVFSYKQNSDATSFYVQDEIYKRKTEFLNLFNNYKCELYICGHKSIRYKVMDILKSHDQFDEKKKKRVHVEVY.

An apicoplast-targeting transit peptide spans 1–18; the sequence is MKIRFVFILSVLISGVCC. Residues K68, 155–159, 172–179, 192–194, and T235 contribute to the FAD site; these read ARLYS, AIKIHKYE, and YCS. One can recognise an FAD-binding FR-type domain in the interval 68–218; the sequence is KNPLKCKIVD…TGAHGYFNLP (151 aa). Position 174 (K174) interacts with NADP(+). NADP(+)-binding positions include 272 to 273, S302, 313 to 315, and 341 to 343; these read VY, YVQ, and HKS. The FAD site is built by K342 and Y371.

The protein belongs to the ferredoxin--NADP reductase type 1 family. Monomer. Homodimer; disulfide linked. NADP binding accelerates formation of an inactive, disulfide-linked homodimer when the protein is exposed to air for 24 hours or more (in vitro); the physiological relevance of this is uncertain. FAD serves as cofactor.

It is found in the plastid. Its subcellular location is the apicoplast. The enzyme catalyses 2 reduced [2Fe-2S]-[ferredoxin] + NADP(+) + H(+) = 2 oxidized [2Fe-2S]-[ferredoxin] + NADPH. May play a role in the terminal step of the DOXP/MEP pathway for isoprenoid precursor biosynthesis. The polypeptide is Ferredoxin--NADP reductase, apicoplast (Plasmodium falciparum (isolate 3D7)).